Consider the following 102-residue polypeptide: Citrate lyase acyl carrier protein (102 aa).

Position 14 is an O-(phosphoribosyl dephospho-coenzyme A)serine (Ser-14).

The protein belongs to the CitD family. Oligomer with a subunit composition of (alpha,beta,gamma)6.

Its subcellular location is the cytoplasm. Functionally, covalent carrier of the coenzyme of citrate lyase. This is Citrate lyase acyl carrier protein from Streptococcus pyogenes serotype M4 (strain MGAS10750).